The primary structure comprises 379 residues: Queuine tRNA-ribosyltransferase (379 aa).

The active-site Proton acceptor is aspartate 95. Residues 95–99, aspartate 149, glutamine 197, and glycine 224 contribute to the substrate site; that span reads DSGGF. The tract at residues 255-261 is RNA binding; the sequence is GVGMPAE. Catalysis depends on aspartate 274, which acts as the Nucleophile. Zn(2+)-binding residues include cysteine 312, cysteine 314, cysteine 317, and histidine 343.

The protein belongs to the queuine tRNA-ribosyltransferase family. Homodimer. Within each dimer, one monomer is responsible for RNA recognition and catalysis, while the other monomer binds to the replacement base PreQ1. Zn(2+) serves as cofactor.

The enzyme catalyses 7-aminomethyl-7-carbaguanine + guanosine(34) in tRNA = 7-aminomethyl-7-carbaguanosine(34) in tRNA + guanine. It functions in the pathway tRNA modification; tRNA-queuosine biosynthesis. Functionally, catalyzes the base-exchange of a guanine (G) residue with the queuine precursor 7-aminomethyl-7-deazaguanine (PreQ1) at position 34 (anticodon wobble position) in tRNAs with GU(N) anticodons (tRNA-Asp, -Asn, -His and -Tyr). Catalysis occurs through a double-displacement mechanism. The nucleophile active site attacks the C1' of nucleotide 34 to detach the guanine base from the RNA, forming a covalent enzyme-RNA intermediate. The proton acceptor active site deprotonates the incoming PreQ1, allowing a nucleophilic attack on the C1' of the ribose to form the product. After dissociation, two additional enzymatic reactions on the tRNA convert PreQ1 to queuine (Q), resulting in the hypermodified nucleoside queuosine (7-(((4,5-cis-dihydroxy-2-cyclopenten-1-yl)amino)methyl)-7-deazaguanosine). The sequence is that of Queuine tRNA-ribosyltransferase from Solibacter usitatus (strain Ellin6076).